A 387-amino-acid chain; its full sequence is Protein RecA (387 aa).

ATP is bound at residue 78–85; sequence GPESSGKT. The span at 350–369 shows a compositional bias: basic and acidic residues; it reads QTREVKSIERDPKETKETKS. Residues 350–387 form a disordered region; the sequence is QTREVKSIERDPKETKETKSKQPVSFSTEAEVDIAVGE.

Belongs to the RecA family.

The protein localises to the cytoplasm. Its function is as follows. Can catalyze the hydrolysis of ATP in the presence of single-stranded DNA, the ATP-dependent uptake of single-stranded DNA by duplex DNA, and the ATP-dependent hybridization of homologous single-stranded DNAs. It interacts with LexA causing its activation and leading to its autocatalytic cleavage. The chain is Protein RecA from Leptospira meyeri.